Consider the following 63-residue polypeptide: Sperm protamine P1 (63 aa).

Residues 1–63 are disordered; the sequence is MARYRRHSRS…RYSRRGRRRY (63 aa).

This sequence belongs to the protamine P1 family. As to expression, testis.

It localises to the nucleus. The protein resides in the chromosome. Functionally, protamines substitute for histones in the chromatin of sperm during the haploid phase of spermatogenesis. They compact sperm DNA into a highly condensed, stable and inactive complex. The chain is Sperm protamine P1 (PRM1) from Sminthopsis bindi (Kakadu dunnart).